Consider the following 182-residue polypeptide: Thioredoxin F-type, chloroplastic (182 aa).

Residues 1–69 constitute a chloroplast transit peptide; sequence MALNLCTSPK…SVRSSLETAG (69 aa). A Thioredoxin domain is found at 70-181; sequence PTVTVGKVTE…LVAAIDTVRS (112 aa). Residues Cys106 and Cys109 each act as nucleophile in the active site. Cys106 and Cys109 are disulfide-bonded.

It belongs to the thioredoxin family. Plant F-type subfamily. As to quaternary structure, forms a complex with heterodimeric ferredoxin-thioredoxin reductase (FTR) and ferredoxin.

The protein resides in the plastid. It localises to the chloroplast. In terms of biological role, participates in various redox reactions through the reversible oxidation of the active center dithiol to a disulfide. The F form is known to activate a number of enzymes of the photosynthetic carbon cycle. This Pisum sativum (Garden pea) protein is Thioredoxin F-type, chloroplastic.